Reading from the N-terminus, the 320-residue chain is MPASLLELKKRIASVKQTSKITEAMHMVSAAKLNQTEKRDKGYQEYNRLLHQTVSRLMSASVINHLNKANYRLTQDNIDSIDYDDVFGMGIISDMIKPREEVHSVGYLVVTGDRGLVGSYNSSVIKQMMSLVADDKLQGRESKILSVGSVGSQFFKKNNLNVVYEKDGVSDVPTFKETLPIVSTAIKMYLNGVYDELYVCYTHHVNSLSSAFRAEKMLPIVDLDIGTMEAKESKKIEFEVAPDIDSVLATLLPQFARAEIYGAILDAKTAEHASSMTAMKSATDNAKDLVSSLSLQMNRARQAQITTELTEIVSGANALE.

Belongs to the ATPase gamma chain family. In terms of assembly, F-type ATPases have 2 components, CF(1) - the catalytic core - and CF(0) - the membrane proton channel. CF(1) has five subunits: alpha(3), beta(3), gamma(1), delta(1), epsilon(1). CF(0) has three main subunits: a, b and c.

Its subcellular location is the cell membrane. Functionally, produces ATP from ADP in the presence of a proton gradient across the membrane. The gamma chain is believed to be important in regulating ATPase activity and the flow of protons through the CF(0) complex. This Lactobacillus delbrueckii subsp. bulgaricus (strain ATCC 11842 / DSM 20081 / BCRC 10696 / JCM 1002 / NBRC 13953 / NCIMB 11778 / NCTC 12712 / WDCM 00102 / Lb 14) protein is ATP synthase gamma chain.